The primary structure comprises 501 residues: ATP synthase subunit alpha, chloroplastic (501 aa).

Residue 170–177 participates in ATP binding; it reads GDRQTGKT.

It belongs to the ATPase alpha/beta chains family. As to quaternary structure, F-type ATPases have 2 components, CF(1) - the catalytic core - and CF(0) - the membrane proton channel. CF(1) has five subunits: alpha(3), beta(3), gamma(1), delta(1), epsilon(1). CF(0) has four main subunits: a, b, b' and c.

It localises to the plastid. It is found in the chloroplast thylakoid membrane. It carries out the reaction ATP + H2O + 4 H(+)(in) = ADP + phosphate + 5 H(+)(out). Its function is as follows. Produces ATP from ADP in the presence of a proton gradient across the membrane. The alpha chain is a regulatory subunit. This Pisum sativum (Garden pea) protein is ATP synthase subunit alpha, chloroplastic.